The following is a 156-amino-acid chain: Small ribosomal subunit protein uS7 (156 aa).

This sequence belongs to the universal ribosomal protein uS7 family. As to quaternary structure, part of the 30S ribosomal subunit. Contacts proteins S9 and S11.

One of the primary rRNA binding proteins, it binds directly to 16S rRNA where it nucleates assembly of the head domain of the 30S subunit. Is located at the subunit interface close to the decoding center, probably blocks exit of the E-site tRNA. The sequence is that of Small ribosomal subunit protein uS7 from Dechloromonas aromatica (strain RCB).